The following is a 452-amino-acid chain: Trigger factor (452 aa).

One can recognise a PPIase FKBP-type domain in the interval 170–255 (GDRVTIDFTG…VKSVAAPGPL (86 aa)).

This sequence belongs to the FKBP-type PPIase family. Tig subfamily.

The protein resides in the cytoplasm. It catalyses the reaction [protein]-peptidylproline (omega=180) = [protein]-peptidylproline (omega=0). Functionally, involved in protein export. Acts as a chaperone by maintaining the newly synthesized protein in an open conformation. Functions as a peptidyl-prolyl cis-trans isomerase. In Xanthobacter autotrophicus (strain ATCC BAA-1158 / Py2), this protein is Trigger factor.